The primary structure comprises 394 residues: Putative bacilysin exporter BacE (394 aa).

A run of 11 helical transmembrane segments spans residues 11 to 31 (LLYG…ALLI), 43 to 63 (SGVI…GVLV), 69 to 89 (IKIM…LTFL), 92 to 112 (GEYP…GVFF), 142 to 162 (IIVG…ELAV), 166 to 186 (GVTY…FVPI), 215 to 235 (MFTM…FPIV), 244 to 264 (IGNF…AALV), 288 to 308 (LFLF…FFIA), 332 to 352 (IFSV…MFIN), and 353 to 373 (ILSA…LFLH).

This sequence belongs to the major facilitator superfamily. Drug:H(+) antiporter-3 (DHA3) (TC 2.A.1.21) family.

The protein localises to the cell membrane. In terms of biological role, part of the bacilysin biosynthesis operon. May be involved in self-resistance to bacilysin by permitting efflux of this antibiotic. This chain is Putative bacilysin exporter BacE (bacE), found in Bacillus subtilis (strain 168).